The sequence spans 486 residues: Argininosuccinate lyase (486 aa).

Belongs to the lyase 1 family. Argininosuccinate lyase subfamily.

Its subcellular location is the cytoplasm. It catalyses the reaction 2-(N(omega)-L-arginino)succinate = fumarate + L-arginine. Its pathway is amino-acid biosynthesis; L-arginine biosynthesis; L-arginine from L-ornithine and carbamoyl phosphate: step 3/3. This chain is Argininosuccinate lyase, found in Acidovorax ebreus (strain TPSY) (Diaphorobacter sp. (strain TPSY)).